The sequence spans 461 residues: Cysteine--tRNA ligase (461 aa).

Cys28 is a binding site for Zn(2+). Positions 30–40 match the 'HIGH' region motif; it reads ITVYDLCHIGH. Residues Cys209, His234, and Glu238 each contribute to the Zn(2+) site. The 'KMSKS' region signature appears at 266-270; that stretch reads KMSKS. Lys269 contributes to the ATP binding site.

It belongs to the class-I aminoacyl-tRNA synthetase family. As to quaternary structure, monomer. The cofactor is Zn(2+).

Its subcellular location is the cytoplasm. The enzyme catalyses tRNA(Cys) + L-cysteine + ATP = L-cysteinyl-tRNA(Cys) + AMP + diphosphate. This is Cysteine--tRNA ligase from Shigella sonnei (strain Ss046).